Here is a 1037-residue protein sequence, read N- to C-terminus: Receptor kinase-like protein Xa21 (1037 aa).

Positions 1-24 (MARSPTSVMISSLLLLLLIGPASS) are cleaved as a signal peptide. At 25 to 665 (DDAAAAAAAR…LLENRKHFPV (641 aa)) the chain is on the extracellular side. 3 N-linked (GlcNAc...) asparagine glycosylation sites follow: Asn66, Asn101, and Asn112. LRR repeat units follow at residues 89-112 (PHRVVKLLLRSSNLSGIISPSLGN), 113-137 (LSFLRELDLSDNYLSGEIPPELSRL), 138-161 (SRLQLLELSGNSIQGSIPAAIGAC), 163-185 (KLTSLDLSHNQLRGMIPREIGAS), 187-210 (KHLSNLYLHTNGLSGEIPSALGNL), 211-234 (TSLQYFDLSCNRLSGAIPSSLGQL), 236-259 (SSLLTMNLRQNNLSGMIPNSIWNL), 260-283 (SSLRAFSVSENKLGGMIPTNAFKT), 285-308 (HLLEVIDMGTNRFYGKIPASVANA), 310-331 (HLTQLQIDGNLFSGIITSGFGR), and 333-355 (RNLTTLYLWRNLFQTREQEDWGF). Asn209 carries an N-linked (GlcNAc...) asparagine glycan. N-linked (GlcNAc...) asparagine glycosylation is found at Asn247 and Asn258. An N-linked (GlcNAc...) asparagine glycan is attached at Asn307. Residues Asn334, Asn361, and Asn385 are each glycosylated (N-linked (GlcNAc...) asparagine). LRR repeat units lie at residues 362 to 385 (CSKLQTLDLGENNLGGVLPNSFSN), 387 to 411 (STSLSFLALDLNKITGSIPKDIGNL), 412 to 435 (IGLQHLYLCNNNFRGSLPSSLGRL), 437 to 459 (NLGILVAYENNLSGSIPLAIGNL), 460 to 482 (TELNILLLGTNKFSGWIPYTLSN), 483 to 507 (LTNLLSLGLSTNNLSGPIPSELFNI), 509 to 532 (TLSIMINVSKNNLEGSIPQEIGHL), 533 to 556 (KNLVEFHAESNRLSGKIPNTLGDC), 557 to 580 (QLLRYLYLQNNLLSGSIPSALGQL), 581 to 604 (KGLETLDLSSNNLSGQIPTSLADI), and 606 to 629 (MLHSLNLSFNSFMGEVPTIGAFAD). Residues Asn447, Asn458, Asn482, Asn495, and Asn515 are each glycosylated (N-linked (GlcNAc...) asparagine). N-linked (GlcNAc...) asparagine glycans are attached at residues Asn592 and Asn611. A helical transmembrane segment spans residues 666-686 (LPISVSLVAALAILSSLYLLI). Topologically, residues 687 to 1037 (TWHKRTKKGA…PVCEGASLEF (351 aa)) are cytoplasmic. Positions 689-694 (HKRTKK) match the Nuclear localization signal motif. Ser698 is modified (phosphoserine). Residue Thr700 is modified to Phosphothreonine. Ser701 bears the Phosphoserine mark. Position 717 is a phosphothreonine (Thr717). Residues 720-1019 (FAPTNLLGSG…GDIIDELNAI (300 aa)) form the Protein kinase domain. ATP-binding positions include 726 to 734 (LGSGSFGSV) and Lys748. Asp854 (proton acceptor) is an active-site residue.

This sequence belongs to the protein kinase superfamily. Ser/Thr protein kinase family. Interacts with WRKY62/XB10 in the nucleus. Interacts with SERK2. It depends on Mn(2+) as a cofactor. Mg(2+) is required as a cofactor. Post-translationally, undergoes protein cleavage upon X.oryzae pv. oryzae protein Ax21 detection, thus releasing the processed protein kinase Xa21 chain. Autophosphorylated on serine and threonine residues; these phosphorylation prevents proteolytic degradation.

The protein resides in the cell membrane. The protein localises to the endoplasmic reticulum membrane. It localises to the nucleus. The catalysed reaction is L-seryl-[protein] + ATP = O-phospho-L-seryl-[protein] + ADP + H(+). It catalyses the reaction L-threonyl-[protein] + ATP = O-phospho-L-threonyl-[protein] + ADP + H(+). Receptor kinase that detects X.oryzae pv. oryzae protein Ax21 to promote innate immunity. Following X.oryzae pv. oryzae protein Ax21 detection, undergoes cleavage, releasing the processed protein kinase Xa21 chain. Its function is as follows. The processed protein kinase Xa21 chain released by protein cleavage after X.oryzae pv. oryzae protein Ax21 detection translocates into the nucleus where it can bind and regulate WRKY62, a transcription factor. Confers resistance to the bacterial pathogen X.oryzae pv. oryzae (Xoo). The chain is Receptor kinase-like protein Xa21 from Oryza sativa subsp. japonica (Rice).